The following is a 396-amino-acid chain: Ribosomal RNA large subunit methyltransferase I (396 aa).

In terms of domain architecture, PUA spans 2 to 79 (AVRIKLKPGR…REEEIDREFF (78 aa)).

It belongs to the methyltransferase superfamily. RlmI family.

The protein resides in the cytoplasm. The enzyme catalyses cytidine(1962) in 23S rRNA + S-adenosyl-L-methionine = 5-methylcytidine(1962) in 23S rRNA + S-adenosyl-L-homocysteine + H(+). Functionally, specifically methylates the cytosine at position 1962 (m5C1962) of 23S rRNA. This chain is Ribosomal RNA large subunit methyltransferase I, found in Shewanella sp. (strain MR-4).